Here is a 637-residue protein sequence, read N- to C-terminus: Threonine--tRNA ligase (637 aa).

In terms of domain architecture, TGS spans 1–61 (MLNITLPDGS…VEDSAVQIIT (61 aa)). The interval 242 to 533 (DHRKLGKQLD…LIENHAGSFP (292 aa)) is catalytic. Positions 333, 384, and 510 each coordinate Zn(2+).

This sequence belongs to the class-II aminoacyl-tRNA synthetase family. As to quaternary structure, homodimer. Requires Zn(2+) as cofactor.

It localises to the cytoplasm. The enzyme catalyses tRNA(Thr) + L-threonine + ATP = L-threonyl-tRNA(Thr) + AMP + diphosphate + H(+). Catalyzes the attachment of threonine to tRNA(Thr) in a two-step reaction: L-threonine is first activated by ATP to form Thr-AMP and then transferred to the acceptor end of tRNA(Thr). Also edits incorrectly charged L-seryl-tRNA(Thr). This Neisseria meningitidis serogroup B (strain ATCC BAA-335 / MC58) protein is Threonine--tRNA ligase.